The sequence spans 526 residues: GMP synthase [glutamine-hydrolyzing] (526 aa).

Positions 3–199 (RVAIIDFGSQ…FVRIAGCDNN (197 aa)) constitute a Glutamine amidotransferase type-1 domain. Residue cysteine 83 is the Nucleophile of the active site. Active-site residues include histidine 174 and glutamate 176. Residues 200-392 (WTVESFLDEQ…LGISDEILMR (193 aa)) form the GMPS ATP-PPase domain. Residue 227–233 (SGGVDSS) participates in ATP binding.

As to quaternary structure, homodimer.

It carries out the reaction XMP + L-glutamine + ATP + H2O = GMP + L-glutamate + AMP + diphosphate + 2 H(+). It functions in the pathway purine metabolism; GMP biosynthesis; GMP from XMP (L-Gln route): step 1/1. Catalyzes the synthesis of GMP from XMP. The sequence is that of GMP synthase [glutamine-hydrolyzing] from Ehrlichia chaffeensis (strain ATCC CRL-10679 / Arkansas).